Reading from the N-terminus, the 454-residue chain is Uridine kinase (454 aa).

28 to 35 (GPSGSGKT) provides a ligand contact to ATP.

The protein belongs to the uridine kinase family.

The protein resides in the cytoplasm. It localises to the nucleus. It catalyses the reaction uridine + ATP = UMP + ADP + H(+). The catalysed reaction is cytidine + ATP = CMP + ADP + H(+). It functions in the pathway pyrimidine metabolism; CTP biosynthesis via salvage pathway; CTP from cytidine: step 1/3. Its pathway is pyrimidine metabolism; UMP biosynthesis via salvage pathway; UMP from uridine: step 1/1. Catalyzes the conversion of uridine into UMP and cytidine into CMP in the pyrimidine salvage pathway. This chain is Uridine kinase (urk1), found in Schizosaccharomyces pombe (strain 972 / ATCC 24843) (Fission yeast).